We begin with the raw amino-acid sequence, 426 residues long: Selenocysteine lyase (426 aa).

Residue K239 is modified to N6-(pyridoxal phosphate)lysine. Residue C367 is the S-selanylcysteine intermediate of the active site.

Belongs to the class-V pyridoxal-phosphate-dependent aminotransferase family. As to quaternary structure, homodimer. It depends on pyridoxal 5'-phosphate as a cofactor.

It is found in the cytoplasm. It localises to the cytosol. The enzyme catalyses L-selenocysteine + AH2 = hydrogenselenide + L-alanine + A + H(+). Functionally, catalyzes the decomposition of L-selenocysteine to L-alanine and elemental selenium. This is Selenocysteine lyase (scly) from Xenopus laevis (African clawed frog).